A 2430-amino-acid chain; its full sequence is Spatacsin (2430 aa).

2 positions are modified to phosphoserine: serine 1942 and serine 1943.

Interacts with AP5Z1, AP5B1, AP5S1 and ZFYVE26. Ubiquitously expressed at low level. Expressed in embryonic and adult cortical projection neurons.

The protein resides in the cytoplasm. Its subcellular location is the cytosol. It is found in the nucleus. It localises to the cell projection. The protein localises to the axon. The protein resides in the dendrite. Its subcellular location is the synapse. Functionally, may play a role in neurite plasticity by maintaining cytoskeleton stability and regulating synaptic vesicle transport. This is Spatacsin (Spg11) from Mus musculus (Mouse).